Reading from the N-terminus, the 1437-residue chain is Myomesin-3 (1437 aa).

A disordered region spans residues 1 to 49 (MTLPHSLGGAGDPRPPQAMEVHRLEHRQEEEQKEERQHSLRMGSSVRRR). Positions 20–38 (EVHRLEHRQEEEQKEERQH) are enriched in basic and acidic residues. Residues 120 to 149 (RLLRQRRDWKTLRRRTEEKVQEAKELRELC) adopt a coiled-coil conformation. Ig-like C2-type domains lie at 154–246 (PWFW…AKVL) and 269–361 (PSVE…TYVL). Fibronectin type-III domains are found at residues 375-469 (SPLN…VMGD), 503-598 (PPTN…LRGP), 604-696 (PPAQ…VKQA), 702-797 (APYG…CKEW), and 804-899 (PPYD…LEDK). Ig-like C2-type domains are found at residues 1120-1205 (PYFE…LDLT) and 1334-1423 (AKVV…VTIS).

As to quaternary structure, homodimer.

The protein resides in the cytoplasm. Its subcellular location is the myofibril. The protein localises to the sarcomere. It localises to the m line. In terms of biological role, may link the intermediate filament cytoskeleton to the M-disk of the myofibrils in striated muscle. The polypeptide is Myomesin-3 (MYOM3) (Homo sapiens (Human)).